A 350-amino-acid chain; its full sequence is Biotin synthase (350 aa).

One can recognise a Radical SAM core domain in the interval 41–268 (NEVQISRLLS…KSRVRLSAGR (228 aa)). 3 residues coordinate [4Fe-4S] cluster: Cys56, Cys60, and Cys63. Residues Cys100, Cys131, Cys191, and Arg263 each coordinate [2Fe-2S] cluster.

Belongs to the radical SAM superfamily. Biotin synthase family. Homodimer. It depends on [4Fe-4S] cluster as a cofactor. Requires [2Fe-2S] cluster as cofactor.

It carries out the reaction (4R,5S)-dethiobiotin + (sulfur carrier)-SH + 2 reduced [2Fe-2S]-[ferredoxin] + 2 S-adenosyl-L-methionine = (sulfur carrier)-H + biotin + 2 5'-deoxyadenosine + 2 L-methionine + 2 oxidized [2Fe-2S]-[ferredoxin]. It functions in the pathway cofactor biosynthesis; biotin biosynthesis; biotin from 7,8-diaminononanoate: step 2/2. In terms of biological role, catalyzes the conversion of dethiobiotin (DTB) to biotin by the insertion of a sulfur atom into dethiobiotin via a radical-based mechanism. The polypeptide is Biotin synthase (Shewanella sp. (strain ANA-3)).